A 227-amino-acid polypeptide reads, in one-letter code: DNA repair protein RecO (227 aa).

The protein belongs to the RecO family.

Its function is as follows. Involved in DNA repair and RecF pathway recombination. The protein is DNA repair protein RecO of Pseudomonas savastanoi pv. phaseolicola (strain 1448A / Race 6) (Pseudomonas syringae pv. phaseolicola (strain 1448A / Race 6)).